Reading from the N-terminus, the 364-residue chain is Zinc transporter 3 (364 aa).

Positions 1 to 23 (MGAKKHTLQVLPWLLLFAQHTAA) are cleaved as a signal peptide. Topologically, residues 24–44 (SACDCANTTDGADRQGAMKLK) are extracellular. N-linked (GlcNAc...) asparagine glycosylation occurs at asparagine 30. A helical transmembrane segment spans residues 45–65 (LIAIASILAAGAAGVLVPVIG). At 66-76 (RSMAALRPDGD) the chain is on the cytoplasmic side. A helical transmembrane segment spans residues 77-97 (IFFAVKAFAAGVILATGMVHI). At 98–119 (LPAAFDALTSPCLKRGGGDRNP) the chain is on the extracellular side. A helical transmembrane segment spans residues 120–140 (FPFAGLVSMSAAVSTMVVDSL). The Cytoplasmic portion of the chain corresponds to 141–213 (AAGYYHRSQF…ESIRHKVVSQ (73 aa)). A helical transmembrane segment spans residues 214-234 (VLELGILVHSVIIGVSLGASV). Residues 235–241 (RPSTIRP) are Extracellular-facing. The helical transmembrane segment at 242 to 262 (LVGALSFHQFFEGVGLGGCIV) threads the bilayer. Residues 263-271 (QANFKVRAT) are Cytoplasmic-facing. The helical transmembrane segment at 272–292 (VIMAIFFSLTAPVGIVLGIAI) threads the bilayer. At 293 to 303 (SSSYNVHSSTA) the chain is on the extracellular side. A helical transmembrane segment spans residues 304–324 (FVVEGVFNSASAGILIYMSLV). Residues 325–343 (DLLATDFNNPKLQINTKLQ) lie on the Cytoplasmic side of the membrane. The chain crosses the membrane as a helical span at residues 344–364 (LMAYLALFLGAGLMSMLAIWA).

It belongs to the ZIP transporter (TC 2.A.5) family. As to expression, expressed in vascular bundles of stems.

It localises to the cell membrane. Functionally, zinc transporter that may mediate zinc uptake from the rhizosphere. Seems specific to zinc ions and may not transport other divalent cations. This chain is Zinc transporter 3 (ZIP3), found in Oryza sativa subsp. japonica (Rice).